A 214-amino-acid polypeptide reads, in one-letter code: Potassium-transporting ATPase KdpC subunit (214 aa).

Residues 17 to 37 traverse the membrane as a helical segment; the sequence is LWVITALIYPFSMIAIGQILF.

This sequence belongs to the KdpC family. In terms of assembly, the system is composed of three essential subunits: KdpA, KdpB and KdpC.

It localises to the cell inner membrane. Its function is as follows. Part of the high-affinity ATP-driven potassium transport (or Kdp) system, which catalyzes the hydrolysis of ATP coupled with the electrogenic transport of potassium into the cytoplasm. This subunit acts as a catalytic chaperone that increases the ATP-binding affinity of the ATP-hydrolyzing subunit KdpB by the formation of a transient KdpB/KdpC/ATP ternary complex. The polypeptide is Potassium-transporting ATPase KdpC subunit (Microcystis aeruginosa (strain NIES-843 / IAM M-2473)).